The chain runs to 265 residues: Capsule polysaccharide export inner-membrane protein BexB (265 aa).

Helical transmembrane passes span 37 to 57, 64 to 84, 118 to 138, 151 to 171, 178 to 198, and 235 to 255; these read IGFFWLFVEPLLMTFFIVMMW, KFSTLNMIAFVMTGYPMAMMW, LLEVAGASIAQILFMAILVMI, LIAWFLMAMFAFALGLIICAI, FGKIWGTLSFVLLPISGAFFF, and ESIGFLVVSDLALLLLGLVMV. Residues 37-258 form the ABC transmembrane type-2 domain; sequence IGFFWLFVEP…LLGLVMVKNF (222 aa).

It belongs to the ABC-2 integral membrane protein family.

It localises to the cell inner membrane. In terms of biological role, may form an ATP-driven capsule polysaccharide export apparatus, in association with the BexA, BexC and BexD proteins. The polypeptide is Capsule polysaccharide export inner-membrane protein BexB (bexB) (Haemophilus influenzae).